A 382-amino-acid polypeptide reads, in one-letter code: V-type proton ATPase subunit C 1 (382 aa).

Thr2 carries the N-acetylthreonine modification.

It belongs to the V-ATPase C subunit family. As to quaternary structure, V-ATPase is a heteromultimeric enzyme made up of two complexes: the ATP-hydrolytic V1 complex and the proton translocation V0 complex. The V1 complex consists of three catalytic AB heterodimers that form a heterohexamer, three peripheral stalks each consisting of EG heterodimers, one central rotor including subunits D and F, and the regulatory subunits C and H. The proton translocation complex V0 consists of the proton transport subunit a, a ring of proteolipid subunits c9c'', rotary subunit d, subunits e and f, and the accessory subunits ATP6AP1/Ac45 and ATP6AP2/PRR. As to expression, expressed in brain (at protein level).

It localises to the cytoplasmic vesicle. The protein localises to the secretory vesicle. Its subcellular location is the synaptic vesicle membrane. The protein resides in the clathrin-coated vesicle membrane. Its function is as follows. Subunit of the V1 complex of vacuolar(H+)-ATPase (V-ATPase), a multisubunit enzyme composed of a peripheral complex (V1) that hydrolyzes ATP and a membrane integral complex (V0) that translocates protons. V-ATPase is responsible for acidifying and maintaining the pH of intracellular compartments and in some cell types, is targeted to the plasma membrane, where it is responsible for acidifying the extracellular environment. Subunit C is necessary for the assembly of the catalytic sector of the enzyme and is likely to have a specific function in its catalytic activity. In Rattus norvegicus (Rat), this protein is V-type proton ATPase subunit C 1 (Atp6v1c1).